The sequence spans 1068 residues: tRNA wybutosine-synthesizing protein 4 (1068 aa).

Residues 1–31 (MCPPEQPAKAMAPSKSNQAAKSAVPTKEEKS) form a disordered region. S-adenosyl-L-methionine contacts are provided by residues Arg-81, Gly-107, Asp-134, 181-182 (DL), and Glu-208. In terms of domain architecture, JmjC spans 876–1024 (ADFPSLSSDF…ALGRDVYGNR (149 aa)).

It belongs to the methyltransferase superfamily. LCMT family.

The catalysed reaction is 7-[(3S)-3-amino-3-carboxypropyl]wyosine(37) in tRNA(Phe) + S-adenosyl-L-methionine = 7-[(3S)-(3-amino-3-methoxycarbonyl)propyl]wyosine(37) in tRNA(Phe) + S-adenosyl-L-homocysteine. The enzyme catalyses 7-[(3S)-(3-amino-3-methoxycarbonyl)propyl]wyosine(37) in tRNA(Phe) + S-adenosyl-L-methionine + CO2 = wybutosine(37) in tRNA(Phe) + S-adenosyl-L-homocysteine + 2 H(+). It functions in the pathway tRNA modification; wybutosine-tRNA(Phe) biosynthesis. Its function is as follows. Probable S-adenosyl-L-methionine-dependent methyltransferase that acts as a component of the wybutosine biosynthesis pathway. Wybutosine is a hyper modified guanosine with a tricyclic base found at the 3'-position adjacent to the anticodon of eukaryotic phenylalanine tRNA. May methylate the carboxyl group of leucine residues to form alpha-leucine ester residues. The protein is tRNA wybutosine-synthesizing protein 4 (ppm2) of Emericella nidulans (strain FGSC A4 / ATCC 38163 / CBS 112.46 / NRRL 194 / M139) (Aspergillus nidulans).